The primary structure comprises 320 residues: tRNA uridine(34) hydroxylase (320 aa).

The 95-residue stretch at 123–217 folds into the Rhodanese domain; sequence EDENTVILDA…YGKDPETKGQ (95 aa). Residue cysteine 177 is the Cysteine persulfide intermediate of the active site.

It belongs to the TrhO family.

The enzyme catalyses uridine(34) in tRNA + AH2 + O2 = 5-hydroxyuridine(34) in tRNA + A + H2O. Catalyzes oxygen-dependent 5-hydroxyuridine (ho5U) modification at position 34 in tRNAs. The chain is tRNA uridine(34) hydroxylase from Staphylococcus epidermidis (strain ATCC 12228 / FDA PCI 1200).